Reading from the N-terminus, the 150-residue chain is CCAAT/enhancer-binding protein gamma (150 aa).

Residue K3 forms a Glycyl lysine isopeptide (Lys-Gly) (interchain with G-Cter in SUMO2) linkage. A disordered region spans residues 27-94 (GLQQVPQLVP…QKAQDTLQRV (68 aa)). Residues 28 to 37 (LQQVPQLVPA) are compositionally biased toward low complexity. Positions 56 to 72 (SPMDRNSDEYRQRRERN) are enriched in basic and acidic residues. Positions 62–125 (SDEYRQRRER…SVLKDLFLEH (64 aa)) constitute a bZIP domain. Residues 66–93 (RQRRERNNMAVKKSRLKSKQKAQDTLQR) are basic motif. Positions 97–118 (LKEENERLEAKIKLLTKELSVL) are leucine-zipper.

It belongs to the bZIP family. C/EBP subfamily. In terms of assembly, binds DNA as a dimer and can form stable heterodimers with CEBPA and CEBPB. Interacts with ZNF638; this interaction increases transcriptional activation.

The protein resides in the nucleus. Its function is as follows. Transcription factor that binds to the promoter and the enhancer regions of target genes. Binds to the promoter and the enhancer of the alpha-1-fetoprotein gene. Binds to the enhancer element PRE-I (positive regulatory element-I) of the IL-4 gene. Binds to the promoter and the enhancer of the immunoglobulin heavy chain. Binds to GPE1, a cis-acting element in the G-CSF gene promoter. The polypeptide is CCAAT/enhancer-binding protein gamma (Cebpg) (Rattus norvegicus (Rat)).